The following is a 1033-amino-acid chain: Potassium-transporting ATPase alpha chain 1 (1033 aa).

The Cytoplasmic portion of the chain corresponds to 1-96 (MGKENYELYS…NALRPPRGTP (96 aa)). Residues Tyr-6 and Tyr-9 each carry the phosphotyrosine modification. The disordered stretch occupies residues 14 to 39 (GTGPGGDMAAKMSKKKAGGGGGKKKE). Basic residues predominate over residues 25-38 (MSKKKAGGGGGKKK). Ser-26 is modified (phosphoserine). A helical transmembrane segment spans residues 97 to 117 (EYVKFARQLAGGLQCLMWVAA). At 118–140 (AICLIAFAIQASEGDLTTDDNLY) the chain is on the lumenal side. A helical transmembrane segment spans residues 141–161 (LALALIAVVVVTGCFGYYQEF). At 162–297 (KSTNIIASFK…NEKTPIAIEI (136 aa)) the chain is on the cytoplasmic side. The helical transmembrane segment at 298–317 (EHFVDIIAGLAILFGATFFV) threads the bilayer. The Lumenal portion of the chain corresponds to 318–329 (VAMCIGYTFLRA). Residues 330–347 (MVFFMAIVVAYVPEGLLA) traverse the membrane as a helical segment. Val-338, Ala-339, Val-341, and Glu-343 together coordinate K(+). At 348–781 (TVTVCLSLTA…EQGRLIFDNL (434 aa)) the chain is on the cytoplasmic side. Residue Asp-385 is the 4-aspartylphosphate intermediate of the active site. Mg(2+)-binding residues include Asp-385 and Thr-387. Ser-461 and Ser-599 each carry phosphoserine. The Mg(2+) site is built by Asp-726 and Asp-730. Residues 782 to 801 (KKSIAYTLTKNIPELTPYLI) form a helical membrane-spanning segment. Glu-795 is a K(+) binding site. The Lumenal segment spans residues 802–811 (YITVSVPLPL). A helical transmembrane segment spans residues 812–832 (GCITILFIELCTDIFPSVSLA). Residue Glu-820 coordinates K(+). The Cytoplasmic segment spans residues 833–852 (YEKAESDIMHLRPRNPRRDR). Ser-838 is modified (phosphoserine). Residues 853–875 (LVNEPLAAYSYFQIGAIQSFAGF) form a helical membrane-spanning segment. At 876-927 (ADYFTAMAQEGWFPLLCVGLRPQWEDHHLQDLQDSYGQEWTFGQRLYQQYTC) the chain is on the lumenal side. A helical transmembrane segment spans residues 928–947 (YTVFFISIEMCQIADVLIRK). Residues 948 to 961 (TRRLSAFQQGFFRN) lie on the Cytoplasmic side of the membrane. Position 952 is a phosphoserine; by PKA (Ser-952). Residues 962–980 (RILVIAIVFQVCIGCFLCY) form a helical membrane-spanning segment. Over 981–995 (CPGMPNIFNFMPIRF) the chain is Lumenal. The chain crosses the membrane as a helical span at residues 996-1016 (QWWLVPMPFGLLIFVYDEIRK). Residues 1017-1033 (LGVRCCPGSWWDQELYY) are Cytoplasmic-facing.

Belongs to the cation transport ATPase (P-type) (TC 3.A.3) family. Type IIC subfamily. The gastric H(+)/K(+) ATPase pump is composed of the catalytic alpha subunit ATP4A and the regulatory beta subunit ATP4B. Interacts (via the P-domain) with ATP4B (via N-terminus); this interaction stabilizes the lumenal-open E2 conformation state and prevents the reverse reaction of the transport cycle.

Its subcellular location is the apical cell membrane. The catalysed reaction is K(+)(out) + ATP + H2O + H(+)(in) = K(+)(in) + ADP + phosphate + 2 H(+)(out). In terms of biological role, the catalytic subunit of the gastric H(+)/K(+) ATPase pump which transports H(+) ions in exchange for K(+) ions across the apical membrane of parietal cells. Uses ATP as an energy source to pump H(+) ions to the gastric lumen while transporting K(+) ion from the lumen into the cell. Remarkably generates a million-fold proton gradient across the gastric parietal cell membrane, acidifying the gastric juice down to pH 1. Within a transport cycle, the transfer of a H(+) ion across the membrane is coupled to ATP hydrolysis and is associated with a transient phosphorylation that shifts the pump conformation from inward-facing (E1) to outward-facing state (E2). The release of the H(+) ion in the stomach lumen is followed by binding of K(+) ion converting the pump conformation back to the E1 state. In Rattus norvegicus (Rat), this protein is Potassium-transporting ATPase alpha chain 1 (Atp4a).